The sequence spans 271 residues: Large ribosomal subunit protein uL18 (271 aa).

Residues 245-264 (IRENPCPPKKERTKPADAKR) are compositionally biased toward basic and acidic residues. The tract at residues 245-271 (IRENPCPPKKERTKPADAKRWSPQAHL) is disordered.

It belongs to the universal ribosomal protein uL18 family. As to quaternary structure, component of the large ribosomal subunit (LSU).

The protein resides in the cytoplasm. Its subcellular location is the nucleus. Its function is as follows. Component of the ribosome, a large ribonucleoprotein complex responsible for the synthesis of proteins in the cell. The small ribosomal subunit (SSU) binds messenger RNAs (mRNAs) and translates the encoded message by selecting cognate aminoacyl-transfer RNA (tRNA) molecules. The large subunit (LSU) contains the ribosomal catalytic site termed the peptidyl transferase center (PTC), which catalyzes the formation of peptide bonds, thereby polymerizing the amino acids delivered by tRNAs into a polypeptide chain. The nascent polypeptides leave the ribosome through a tunnel in the LSU and interact with protein factors that function in enzymatic processing, targeting, and the membrane insertion of nascent chains at the exit of the ribosomal tunnel. The polypeptide is Large ribosomal subunit protein uL18 (RPL5) (Dunaliella salina (Green alga)).